The following is a 638-amino-acid chain: Threonine--tRNA ligase (638 aa).

The TGS domain occupies 1-61 (MPIITLPDGS…NKDSKVVIIT (61 aa)). The interval 242 to 533 (DHRKLGKKHS…LIEQYEAKFP (292 aa)) is catalytic. Cys-333, His-384, and His-510 together coordinate Zn(2+).

It belongs to the class-II aminoacyl-tRNA synthetase family. As to quaternary structure, homodimer. Zn(2+) serves as cofactor.

The protein localises to the cytoplasm. It carries out the reaction tRNA(Thr) + L-threonine + ATP = L-threonyl-tRNA(Thr) + AMP + diphosphate + H(+). Its function is as follows. Catalyzes the attachment of threonine to tRNA(Thr) in a two-step reaction: L-threonine is first activated by ATP to form Thr-AMP and then transferred to the acceptor end of tRNA(Thr). Also edits incorrectly charged L-seryl-tRNA(Thr). The protein is Threonine--tRNA ligase of Prochlorococcus marinus (strain MIT 9301).